Consider the following 267-residue polypeptide: Tryptophan synthase alpha chain (267 aa).

Catalysis depends on proton acceptor residues E49 and D60.

Belongs to the TrpA family. In terms of assembly, tetramer of two alpha and two beta chains.

The catalysed reaction is (1S,2R)-1-C-(indol-3-yl)glycerol 3-phosphate + L-serine = D-glyceraldehyde 3-phosphate + L-tryptophan + H2O. It participates in amino-acid biosynthesis; L-tryptophan biosynthesis; L-tryptophan from chorismate: step 5/5. The alpha subunit is responsible for the aldol cleavage of indoleglycerol phosphate to indole and glyceraldehyde 3-phosphate. The sequence is that of Tryptophan synthase alpha chain from Geotalea uraniireducens (strain Rf4) (Geobacter uraniireducens).